Consider the following 102-residue polypeptide: UPF0235 protein Swol_0959 (102 aa).

The protein belongs to the UPF0235 family.

The sequence is that of UPF0235 protein Swol_0959 from Syntrophomonas wolfei subsp. wolfei (strain DSM 2245B / Goettingen).